The following is a 346-amino-acid chain: Elongation factor Ts (346 aa).

Residues 80–83 are involved in Mg(2+) ion dislocation from EF-Tu; the sequence is TDFV.

Belongs to the EF-Ts family.

Its subcellular location is the cytoplasm. In terms of biological role, associates with the EF-Tu.GDP complex and induces the exchange of GDP to GTP. It remains bound to the aminoacyl-tRNA.EF-Tu.GTP complex up to the GTP hydrolysis stage on the ribosome. The sequence is that of Elongation factor Ts from Streptococcus pyogenes serotype M3 (strain ATCC BAA-595 / MGAS315).